The following is a 442-amino-acid chain: D-galactonate dehydratase family member SSBG_02010 (442 aa).

A Mg(2+)-binding site is contributed by Asp246. A D-arabinonate-binding site is contributed by His248. Positions 272 and 298 each coordinate Mg(2+). D-arabinonate contacts are provided by Glu298, Arg319, His348, and Glu375.

Belongs to the mandelate racemase/muconate lactonizing enzyme family. GalD subfamily.

In terms of biological role, has no detectable activity with D-mannonate and with a panel of 70 other acid sugars (in vitro), in spite of the conservation of the residues that are expected to be important for catalytic activity and cofactor binding. May have evolved a divergent function. The chain is D-galactonate dehydratase family member SSBG_02010 from Streptomyces sp. (strain SPB074).